A 670-amino-acid chain; its full sequence is tRNA 5-methylaminomethyl-2-thiouridine biosynthesis bifunctional protein MnmC (670 aa).

The segment at 1–245 (MKPIAIQPAS…KREMLTGALS (245 aa)) is tRNA (mnm(5)s(2)U34)-methyltransferase. The FAD-dependent cmnm(5)s(2)U34 oxidoreductase stretch occupies residues 271–670 (VGGGIASALL…RKLLKGRAAS (400 aa)).

In the N-terminal section; belongs to the methyltransferase superfamily. tRNA (mnm(5)s(2)U34)-methyltransferase family. The protein in the C-terminal section; belongs to the DAO family. FAD serves as cofactor.

It localises to the cytoplasm. The catalysed reaction is 5-aminomethyl-2-thiouridine(34) in tRNA + S-adenosyl-L-methionine = 5-methylaminomethyl-2-thiouridine(34) in tRNA + S-adenosyl-L-homocysteine + H(+). Functionally, catalyzes the last two steps in the biosynthesis of 5-methylaminomethyl-2-thiouridine (mnm(5)s(2)U) at the wobble position (U34) in tRNA. Catalyzes the FAD-dependent demodification of cmnm(5)s(2)U34 to nm(5)s(2)U34, followed by the transfer of a methyl group from S-adenosyl-L-methionine to nm(5)s(2)U34, to form mnm(5)s(2)U34. The sequence is that of tRNA 5-methylaminomethyl-2-thiouridine biosynthesis bifunctional protein MnmC from Cronobacter sakazakii (strain ATCC BAA-894) (Enterobacter sakazakii).